A 103-amino-acid chain; its full sequence is Putative inactive recombination-promoting nuclease-like protein YjiP (103 aa).

This sequence belongs to the Rpn/YhgA-like nuclease family.

This pseudogene is the N-terminal fragment of low activity DNA endonuclease RpnD which probably yields 3'-hydroxyl ends. The intact protein can be seen in this entry (AC B7NGZ6). Expression of the repaired protein increases the frequency of recA-independent recombination, but also decreases viability probably via DNA damage; in a RecA strain expression has no effect on viability but does induce the SOS repair response. May play a role in horizontal gene transfer. This is Putative inactive recombination-promoting nuclease-like protein YjiP (yjiP) from Escherichia coli (strain K12).